Consider the following 96-residue polypeptide: MKIRPLHDRVVVRRLEEERTSAGGIVIPDSAAEKPSRGEVISVGPGKPLDNGEVRSLDVKVGDQILFGKYAGTEVKLAGDEYIVMREDDIMGVIEK.

It belongs to the GroES chaperonin family. Heptamer of 7 subunits arranged in a ring. Interacts with the chaperonin GroEL.

It is found in the cytoplasm. Functionally, together with the chaperonin GroEL, plays an essential role in assisting protein folding. The GroEL-GroES system forms a nano-cage that allows encapsulation of the non-native substrate proteins and provides a physical environment optimized to promote and accelerate protein folding. GroES binds to the apical surface of the GroEL ring, thereby capping the opening of the GroEL channel. This is Co-chaperonin GroES from Coxiella burnetii (strain Dugway 5J108-111).